The following is a 356-amino-acid chain: MEVLEEKPKEGKVKLKVETLDDLWHLYHVISPGDIVYAKTLRKQAQRSDSLRPEKVEAIPVFLGVRAEKINLHRFANQLRVTGPIVYASRDDVPLGKYHTIAVEPGMTITIQKERWRSHHVERIKEAVEASKRAKVMIVAMEDGEAEVAIVREYGLDFIASIRHNIGGKRYNVKREDEEKKFFHDVAKTIKDLIERENVQKVIVAGPGFYKENFYGFLRENYPELAGKVVLDDTSMGGRVGVYEVIKRGTVDKVYTETRVAQEIKLVEKVIERIAKDEPVAYGLKDVEEAVNYGAVDTLLVLDELLKGDDRERIEEIMEMARNLRANVVVVSSEHEGGDKLKALGGIAAILRFKIH.

Belongs to the eukaryotic release factor 1 family. Pelota subfamily. As to quaternary structure, monomer. Requires a divalent metal cation as cofactor.

It localises to the cytoplasm. Functionally, may function in recognizing stalled ribosomes, interact with stem-loop structures in stalled mRNA molecules, and effect endonucleolytic cleavage of the mRNA. May play a role in the release non-functional ribosomes and degradation of damaged mRNAs. Has endoribonuclease activity. This Pyrococcus abyssi (strain GE5 / Orsay) protein is Protein pelota homolog.